We begin with the raw amino-acid sequence, 146 residues long: Histone H2B (146 aa).

A compositionally biased stretch (basic and acidic residues) spans 1-16 (MAPRADKKPAEKKPGA). The interval 1–52 (MAPRADKKPAEKKPGAEKTPVAEKAPAEKKPRAGKKLPRDAGAAGDKKKKRA) is disordered. N6-acetyllysine occurs at positions 7, 35, and 36. A Glycyl lysine isopeptide (Lys-Gly) (interchain with G-Cter in ubiquitin) cross-link involves residue Lys-142.

The protein belongs to the histone H2B family. As to quaternary structure, the nucleosome is a histone octamer containing two molecules each of H2A, H2B, H3 and H4 assembled in one H3-H4 heterotetramer and two H2A-H2B heterodimers. The octamer wraps approximately 147 bp of DNA. Can be acetylated to form H2BK6ac, H2BK33ac and H2BK34ac. In terms of processing, monoubiquitinated to form H2BK143ub1; may give a specific tag for epigenetic transcriptional activation.

Its subcellular location is the nucleus. The protein localises to the chromosome. Its function is as follows. Core component of nucleosome. Nucleosomes wrap and compact DNA into chromatin, limiting DNA accessibility to the cellular machineries which require DNA as a template. Histones thereby play a central role in transcription regulation, DNA repair, DNA replication and chromosomal stability. DNA accessibility is regulated via a complex set of post-translational modifications of histones, also called histone code, and nucleosome remodeling. In Nicotiana tabacum (Common tobacco), this protein is Histone H2B (HIS2B).